Consider the following 450-residue polypeptide: tRNA modification GTPase MnmE (450 aa).

The (6S)-5-formyl-5,6,7,8-tetrahydrofolate site is built by Arg-25, Glu-83, and Lys-122. Positions 218-377 (GFKVAIIGKP…QMEALLDSIG (160 aa)) constitute a TrmE-type G domain. Asn-228 serves as a coordination point for K(+). GTP contacts are provided by residues 228–233 (NVGKSS), 247–253 (SDIAGTT), and 272–275 (DTAG). Ser-232 contributes to the Mg(2+) binding site. Residues Ser-247, Ile-249, and Thr-252 each contribute to the K(+) site. Residue Thr-253 participates in Mg(2+) binding. A (6S)-5-formyl-5,6,7,8-tetrahydrofolate-binding site is contributed by Lys-450.

This sequence belongs to the TRAFAC class TrmE-Era-EngA-EngB-Septin-like GTPase superfamily. TrmE GTPase family. Homodimer. Heterotetramer of two MnmE and two MnmG subunits. K(+) serves as cofactor.

Its subcellular location is the cytoplasm. In terms of biological role, exhibits a very high intrinsic GTPase hydrolysis rate. Involved in the addition of a carboxymethylaminomethyl (cmnm) group at the wobble position (U34) of certain tRNAs, forming tRNA-cmnm(5)s(2)U34. The polypeptide is tRNA modification GTPase MnmE (Sulfurovum sp. (strain NBC37-1)).